A 473-amino-acid polypeptide reads, in one-letter code: Serine palmitoyltransferase 1 (473 aa).

The Lumenal portion of the chain corresponds to 1–15; it reads MATVAEQWVLVEMVQ. Residues 1–66 form an interaction with SPTLC2 region; that stretch reads MATVAEQWVL…KEELIEEWQP (66 aa). A helical transmembrane segment spans residues 16–36; the sequence is ALYEAPAYHLILEGILILWII. Over 37-473 the chain is Cytoplasmic; sequence RLVFSKTYKL…IREAAQAVLL (437 aa). Position 164 is a phosphotyrosine; by ABL (Tyr164).

The protein belongs to the class-II pyridoxal-phosphate-dependent aminotransferase family. Component of the serine palmitoyltransferase (SPT) complex, which is also composed of SPTLC2 or SPTLC3 and SPTSSA or SPTSSB. The heterodimer with SPTLC2 or SPTLC3 forms the catalytic core of the enzyme, while SPTSSA or SPTSSB subunits determine substrate specificity. SPT also interacts with ORMDL proteins, especially ORMDL3, which negatively regulate SPT activity in the presence of ceramides. Forms dimers of heterodimers with SPTLC2. Interacts with RTN4 (isoform B). Pyridoxal 5'-phosphate is required as a cofactor. In terms of processing, phosphorylation at Tyr-164 inhibits activity and promotes cell survival. In terms of tissue distribution, expressed in a variety of tissues. Highest expression in brain, kidney and liver. Expressed in brown and white adipose tissues.

Its subcellular location is the endoplasmic reticulum membrane. It catalyses the reaction L-serine + hexadecanoyl-CoA + H(+) = 3-oxosphinganine + CO2 + CoA. The enzyme catalyses octadecanoyl-CoA + L-serine + H(+) = 3-oxoeicosasphinganine + CO2 + CoA. The catalysed reaction is tetradecanoyl-CoA + L-serine + H(+) = 3-oxohexadecasphinganine + CO2 + CoA. It carries out the reaction dodecanoyl-CoA + L-serine + H(+) = 3-oxotetradecasphinganine + CO2 + CoA. Its pathway is lipid metabolism; sphingolipid metabolism. SPT complex catalytic activity is negatively regulated by ORMDL proteins, including ORMDL3, in the presence of ceramides. This mechanism allows to maintain ceramide levels at sufficient concentrations for the production of complex sphingolipids, but which prevents the accumulation of ceramides to levels that trigger apoptosis. Its function is as follows. Component of the serine palmitoyltransferase multisubunit enzyme (SPT) that catalyzes the initial and rate-limiting step in sphingolipid biosynthesis by condensing L-serine and activated acyl-CoA (most commonly palmitoyl-CoA) to form long-chain bases. The SPT complex is also composed of SPTLC2 or SPTLC3 and SPTSSA or SPTSSB. Within this complex, the heterodimer with SPTLC2 or SPTLC3 forms the catalytic core. The composition of the serine palmitoyltransferase (SPT) complex determines the substrate preference. The SPTLC1-SPTLC2-SPTSSA complex shows a strong preference for C16-CoA substrate, while the SPTLC1-SPTLC3-SPTSSA isozyme uses both C14-CoA and C16-CoA as substrates, with a slight preference for C14-CoA. The SPTLC1-SPTLC2-SPTSSB complex shows a strong preference for C18-CoA substrate, while the SPTLC1-SPTLC3-SPTSSB isozyme displays an ability to use a broader range of acyl-CoAs, without apparent preference. Required for adipocyte cell viability and metabolic homeostasis. In Mus musculus (Mouse), this protein is Serine palmitoyltransferase 1 (Sptlc1).